The chain runs to 858 residues: Protein lines (858 aa).

The interval 1-102 (MDTSSAAGSG…NSPTTTPCSS (102 aa)) is disordered. Composition is skewed to low complexity over residues 20-30 (STVATSTTSAS) and 65-102 (LDANSNSHLCSSLSSSSSHSLSTPSTANNSPTTTPCSS).

Belongs to the protein lines family. Interacts with drm. In terms of tissue distribution, expressed throughout the embryo, including the hindgut, posterior midgut and embryonic epidermis.

It localises to the cytoplasm. It is found in the nucleus. Has a dual role as a segment polarity protein and as a modulator of the Abd-B protein. Required for Abd-B to activate the transcription of genes (including ems, cut and sal) that are involved in posterior spiracle morphogenesis. Also required for Abd-B to form an eighth abdominal denticle belt. Acts in a hierarchy downstream of drm and upstream of bowl during foregut and hindgut patterning and morphogenesis. Involved in cell rearrangement during elongation of the embryonic hindgut. Required to regulate expression of embryonic hindgut patterning genes in order to establish the large intestine and at least some rectum, and to repress small intestine fate. Required for late wingless (wg)-dependent cell fate specification in the dorsal embryonic epidermis. Acts in concert with wg to regulate expression of wg itself and also to regulate wg-target genes. May have a role in ventral epidermal patterning, independent of wg signaling. In Drosophila melanogaster (Fruit fly), this protein is Protein lines.